Consider the following 453-residue polypeptide: CBL-interacting protein kinase 24 (453 aa).

Positions Tyr-18 to Phe-271 constitute a Protein kinase domain. ATP-binding positions include Ile-24–Val-32 and Lys-47. The active-site Proton acceptor is Asp-141. Positions Asp-159–Glu-186 are activation loop. One can recognise an NAF domain in the interval Asn-310–Asp-336. A PPI region spans residues Lys-343–Val-372.

The protein belongs to the protein kinase superfamily. CAMK Ser/Thr protein kinase family. SNF1 subfamily. As to quaternary structure, interacts with CBL4. Requires Mn(2+) as cofactor.

It catalyses the reaction L-seryl-[protein] + ATP = O-phospho-L-seryl-[protein] + ADP + H(+). The catalysed reaction is L-threonyl-[protein] + ATP = O-phospho-L-threonyl-[protein] + ADP + H(+). In terms of biological role, involved in the regulatory pathway for the control of intracellular Na(+) and K(+) homeostasis and salt tolerance. Operates in synergy with CBL4 to activate the plasma membrane Na(+)/H(+) antiporter SOS1. CIPK serine-threonine protein kinases interact with CBL proteins. Binding of a CBL protein to the regulatory NAF domain of CIPK protein lead to the activation of the kinase in a calcium-dependent manner. This is CBL-interacting protein kinase 24 (CIPK24) from Oryza sativa subsp. japonica (Rice).